Reading from the N-terminus, the 610-residue chain is UvrABC system protein C (610 aa).

In terms of domain architecture, GIY-YIG spans 16 to 94; sequence SQPGVYRMYD…IQRYQPRYNV (79 aa). Residues 204–239 form the UVR domain; the sequence is SQVIEGLIKRMEEASQALRFEEAARIRDQIHAVRQV.

It belongs to the UvrC family. In terms of assembly, interacts with UvrB in an incision complex.

Its subcellular location is the cytoplasm. The UvrABC repair system catalyzes the recognition and processing of DNA lesions. UvrC both incises the 5' and 3' sides of the lesion. The N-terminal half is responsible for the 3' incision and the C-terminal half is responsible for the 5' incision. This Proteus mirabilis (strain HI4320) protein is UvrABC system protein C.